Reading from the N-terminus, the 308-residue chain is Protein translocase subunit SecF (308 aa).

A run of 6 helical transmembrane segments spans residues 28–48 (SIIL…NFGI), 140–160 (IEAG…YIWV), 164–184 (WYFG…ALGF), 194–214 (LSTI…SVVI), 246–266 (ILTV…GGEA), and 272–292 (ILVF…SAPI).

The protein belongs to the SecD/SecF family. SecF subfamily. As to quaternary structure, forms a complex with SecD. Part of the essential Sec protein translocation apparatus which comprises SecA, SecYEG and auxiliary proteins SecDF-YajC and YidC.

Its subcellular location is the cell inner membrane. In terms of biological role, part of the Sec protein translocase complex. Interacts with the SecYEG preprotein conducting channel. SecDF uses the proton motive force (PMF) to complete protein translocation after the ATP-dependent function of SecA. This chain is Protein translocase subunit SecF, found in Rickettsia rickettsii (strain Sheila Smith).